A 412-amino-acid polypeptide reads, in one-letter code: MNDLIINHIAELILPRSTDKPLKGKELDELNVVKNGTVVIKDGKIVYAGTHTDDYDATETIDASGKVVSPALVDAHTHLTFGGSREHEMSLKRQGKSYLEILEMGGGILSTVNATRETSEDDLFKKAEHDLLTMIKHGVLAVESKSGYGLDRENELKQLKVSNRLAEKYDLDMKHTFLGPHAVPKEASSNEAFLEEMIALLPEVKQYADFADIFCETGVFTIEQSQHYMQKAKEAGFKVKIHADEIDPLGGLELAIDEQAISADHLVASSDKGKEKLRNSDTVAVLLPATTFYLGKEDYADARGMLDNNGAIALATDYNPGSSVTNNLQLVMAIAALKLKLSPNEVWNAVTVNAAKAIDINAGTINTGDKANLVIWDAPNHEYIPYHFGINHAEKVIKDGKVIVDNTVSFKA.

2 residues coordinate Fe(3+): His-76 and His-78. Zn(2+) contacts are provided by His-76 and His-78. Residues Arg-85, Tyr-148, and His-181 each coordinate 4-imidazolone-5-propanoate. Tyr-148 is a binding site for N-formimidoyl-L-glutamate. His-242 serves as a coordination point for Fe(3+). Zn(2+) is bound at residue His-242. Glu-245 lines the 4-imidazolone-5-propanoate pocket. Position 317 (Asp-317) interacts with Fe(3+). Residue Asp-317 participates in Zn(2+) binding. The N-formimidoyl-L-glutamate site is built by Asn-319 and Gly-321. Residue Ser-322 coordinates 4-imidazolone-5-propanoate.

The protein belongs to the metallo-dependent hydrolases superfamily. HutI family. It depends on Zn(2+) as a cofactor. Fe(3+) serves as cofactor.

The protein resides in the cytoplasm. It catalyses the reaction 4-imidazolone-5-propanoate + H2O = N-formimidoyl-L-glutamate. It participates in amino-acid degradation; L-histidine degradation into L-glutamate; N-formimidoyl-L-glutamate from L-histidine: step 3/3. Its function is as follows. Catalyzes the hydrolytic cleavage of the carbon-nitrogen bond in imidazolone-5-propanoate to yield N-formimidoyl-L-glutamate. It is the third step in the universal histidine degradation pathway. This chain is Imidazolonepropionase, found in Staphylococcus aureus (strain USA300 / TCH1516).